A 274-amino-acid chain; its full sequence is Acetyl-coenzyme A carboxylase carboxyl transferase subunit alpha (274 aa).

Residues 2–250 (NKEFIKSIVV…KKEIMNAMNE (249 aa)) form the CoA carboxyltransferase C-terminal domain.

The protein belongs to the AccA family. In terms of assembly, acetyl-CoA carboxylase is a heterohexamer composed of biotin carboxyl carrier protein (AccB), biotin carboxylase (AccC) and two subunits each of ACCase subunit alpha (AccA) and ACCase subunit beta (AccD).

The protein localises to the cytoplasm. It catalyses the reaction N(6)-carboxybiotinyl-L-lysyl-[protein] + acetyl-CoA = N(6)-biotinyl-L-lysyl-[protein] + malonyl-CoA. The protein operates within lipid metabolism; malonyl-CoA biosynthesis; malonyl-CoA from acetyl-CoA: step 1/1. Its function is as follows. Component of the acetyl coenzyme A carboxylase (ACC) complex. First, biotin carboxylase catalyzes the carboxylation of biotin on its carrier protein (BCCP) and then the CO(2) group is transferred by the carboxyltransferase to acetyl-CoA to form malonyl-CoA. The sequence is that of Acetyl-coenzyme A carboxylase carboxyl transferase subunit alpha from Clostridium botulinum (strain Alaska E43 / Type E3).